Here is a 73-residue protein sequence, read N- to C-terminus: Conotoxin Leo-O2 (73 aa).

An N-terminal signal peptide occupies residues 1–22; sequence MKLTCVLIIAVLFLTACQLVTA. The propeptide occupies 23-47; sequence DYSGDEQQYRAMRLIDAMRNFGDTR. 3 disulfide bridges follow: C49–C59, C56–C64, and C58–C69.

The protein belongs to the conotoxin O1 superfamily. In terms of tissue distribution, expressed by the venom duct.

Its subcellular location is the secreted. This Conus leopardus (Leopard cone) protein is Conotoxin Leo-O2.